Consider the following 561-residue polypeptide: Trehalose-6-phosphate hydrolase (561 aa).

The active-site Nucleophile is Asp-203. Residue Glu-254 is the Proton donor of the active site.

Belongs to the glycosyl hydrolase 13 family.

It is found in the cytoplasm. It catalyses the reaction alpha,alpha-trehalose 6-phosphate + H2O = D-glucose 6-phosphate + D-glucose. With respect to regulation, activity is stimulated by high salt concentrations with different efficiencies depending on the kind of salt. In vitro, inhibited by glucose. Functionally, hydrolyzes trehalose-6-phosphate to glucose and glucose 6-phosphate. Can also very effectively hydrolyze p-nitrophenyl-alpha-D-glucopyranoside, but not lactose, maltose, sucrose or sucrose-6-phosphate. Trehalose is also hydrolyzed, but to a much smaller extent than trehalose-6-phosphate. The protein is Trehalose-6-phosphate hydrolase of Bacillus subtilis (strain 168).